Here is a 163-residue protein sequence, read N- to C-terminus: Nucleotide-binding protein all4662 (163 aa).

Belongs to the YajQ family.

In terms of biological role, nucleotide-binding protein. The sequence is that of Nucleotide-binding protein all4662 from Nostoc sp. (strain PCC 7120 / SAG 25.82 / UTEX 2576).